The chain runs to 350 residues: Outer membrane porin PhoE (350 aa).

Residues 1 to 20 (MNKSTLAIVVSIIASASVHA) form the signal peptide.

This sequence belongs to the Gram-negative porin family. In terms of assembly, homotrimer.

The protein localises to the cell outer membrane. Its function is as follows. Uptake of inorganic phosphate, phosphorylated compounds, and some other negatively charged solutes. The protein is Outer membrane porin PhoE (phoE) of Salmonella typhimurium (strain LT2 / SGSC1412 / ATCC 700720).